Here is a 641-residue protein sequence, read N- to C-terminus: 1,3-beta-glucanosyltransferase PGA5 (641 aa).

The first 23 residues, 1–23 (MTTLSTIWLFLITITAIFQLGLS), serve as a signal peptide directing secretion. Residue N25 is glycosylated (N-linked (GlcNAc...) asparagine). C106 and C135 are disulfide-bonded. 5 residues coordinate (1,3-beta-D-glucosyl)n: Y124, N192, E193, D234, and R239. E193 acts as the Proton donor in catalysis. 6 cysteine pairs are disulfide-bonded: C248/C390, C276/C307, C424/C474, C426/C528, C433/C498, and C451/C456. The active-site Nucleophile is E304. Y336 lines the (1,3-beta-D-glucosyl)n pocket. A disordered region spans residues 535 to 613 (KEEEKEVQEE…SPKTSKSIAG (79 aa)). Positions 571–581 (KSKEKEKGKLI) are enriched in basic and acidic residues. Acidic residues predominate over residues 582 to 593 (EEEEEEEEEEEE). Residues 596–610 (KTPSSGEKSPKTSKS) are compositionally biased toward polar residues. N621 is a glycosylation site (N-linked (GlcNAc...) asparagine). Residue D622 is the site of GPI-anchor amidated aspartate attachment. A propeptide spans 623-641 (SIWKTFIEILFTCSAAILI) (removed in mature form).

Belongs to the glycosyl hydrolase 72 family.

The protein resides in the cell membrane. Its function is as follows. Splits internally a 1,3-beta-glucan molecule and transfers the newly generated reducing end (the donor) to the non-reducing end of another 1,3-beta-glucan molecule (the acceptor) forming a 1,3-beta linkage, resulting in the elongation of 1,3-beta-glucan chains in the cell wall. Involved in spore wall assembly. This is 1,3-beta-glucanosyltransferase PGA5 (PGA5) from Candida albicans (strain SC5314 / ATCC MYA-2876) (Yeast).